A 367-amino-acid polypeptide reads, in one-letter code: Calcium uniporter protein, mitochondrial (367 aa).

The N-terminal 12 residues, methionine 1 to leucine 12, are a transit peptide targeting the mitochondrion. Residues leucine 13–glutamine 232 lie on the Mitochondrial matrix side of the membrane. A disordered region spans residues lysine 61 to aspartate 80. Residues arginine 199 to valine 233 adopt a coiled-coil conformation. The chain crosses the membrane as a helical span at residues valine 233–phenylalanine 253. Over glycine 254–tryptophan 262 the chain is Mitochondrial intermembrane. A helical transmembrane segment spans residues glutamate 263–alanine 284. Positions tryptophan 266–valine 276 match the Selectivity filter motif. Glutamate 270 contacts Ca(2+). Residues tyrosine 285–glutamate 367 lie on the Mitochondrial matrix side of the membrane.

The protein belongs to the MCU (TC 1.A.77) family. As to quaternary structure, homotetramer. Component of the uniplex complex, composed of MCU, EMRE, MICU1 and MICU2 in a 4:4:1:1 stoichiometry.

Its subcellular location is the mitochondrion inner membrane. The catalysed reaction is Ca(2+)(in) = Ca(2+)(out). With respect to regulation, MCU channel activity is regulated by the heterodimer composed of MICU1 and MICU2, which act as calcium-sensors. At low calcium levels, MICU1 occludes the pore of the MCU channel, preventing mitochondrial calcium uptake. At higher calcium levels, calcium-binding to MICU1 and MICU2 induces a conformational change that weakens MCU-MICU1 interactions and moves the MICU1-MICU2 heterodimer away from the pore, allowing calcium permeation through the channel. In terms of biological role, channel-forming and calcium-conducting subunit of the mitochondrial inner membrane calcium uniporter complex (uniplex), which mediates calcium uptake into the mitochondrial matrix. MCU channel activity is regulated by the calcium-sensor subunits of the uniplex MICU1 and MICU2. Mitochondrial calcium homeostasis plays key roles in cellular physiology and regulates ATP production, cytoplasmic calcium signals and activation of cell death pathways. The sequence is that of Calcium uniporter protein, mitochondrial from Tribolium castaneum (Red flour beetle).